We begin with the raw amino-acid sequence, 760 residues long: Formate acetyltransferase 1 (760 aa).

One can recognise a PFL domain in the interval 3-625; the sequence is ELNEKLATAW…KTGNTPDGRR (623 aa). The residue at position 63 (lysine 63) is an N6-acetyllysine; alternate. Lysine 63 carries the N6-succinyllysine; alternate modification. Lysine 107 carries the post-translational modification N6-succinyllysine. Lysine 117 is subject to N6-acetyllysine; alternate. Lysine 117 carries the N6-succinyllysine; alternate modification. Lysine 124 is modified (N6-succinyllysine). At lysine 195 the chain carries N6-acetyllysine; alternate. Position 195 is an N6-succinyllysine; alternate (lysine 195). Catalysis depends on cysteine 419, which acts as the S-acetylcysteine intermediate. Catalysis depends on cysteine 420, which acts as the Cysteine radical intermediate. Residue lysine 454 is modified to N6-acetyllysine; alternate. Lysine 454 bears the N6-succinyllysine; alternate mark. At lysine 467 the chain carries N6-succinyllysine. An N6-acetyllysine mark is found at lysine 541 and lysine 591. The Glycine radical domain maps to 632–760; that stretch reads PGANPMHGRD…VITRTFTQSM (129 aa). Residue lysine 654 is modified to N6-succinyllysine. Glycine 735 carries the glycine radical modification.

The protein belongs to the glycyl radical enzyme (GRE) family. PFL subfamily. In terms of assembly, homodimer. Interacts specifically with FocA.

It is found in the cytoplasm. It carries out the reaction formate + acetyl-CoA = pyruvate + CoA. Its pathway is fermentation; pyruvate fermentation; formate from pyruvate: step 1/1. Catalyzes the conversion of pyruvate to formate and acetyl-CoA. In addition, may be involved in the control of the activity of the formate channel FocA, via direct interaction with FocA. In Escherichia coli (strain K12), this protein is Formate acetyltransferase 1 (pflB).